Consider the following 160-residue polypeptide: Putative NrdI-like protein (160 aa).

It belongs to the NrdI family.

This Streptococcus pyogenes serotype M1 protein is Putative NrdI-like protein.